The primary structure comprises 247 residues: HTH-type transcriptional regulator SarU (247 aa).

2 consecutive DNA-binding regions (H-T-H motif) follow at residues 53 to 76 (LKEI…SLSK) and 178 to 201 (LKDL…RLNN).

The protein belongs to the SarA family.

Its subcellular location is the cytoplasm. In terms of biological role, positive regulator of RNAII and RNAIII in a cell density-dependent manner. It can contribute to the expression of virulence genes controlled by agr. May also regulate target genes via an agr-independent pathway. In Staphylococcus aureus (strain COL), this protein is HTH-type transcriptional regulator SarU (sarU).